A 419-amino-acid polypeptide reads, in one-letter code: L-cysteine:1D-myo-inositol 2-amino-2-deoxy-alpha-D-glucopyranoside ligase (419 aa).

Residues 1–20 (MRSWSVPEVPALPGRGPRVH) are disordered. Residue cysteine 44 participates in Zn(2+) binding. L-cysteinyl-5'-AMP is bound by residues 44–47 (CGIT), threonine 59, and 82–84 (NVT). Positions 46–56 (ITPYDATHLGH) match the 'HIGH' region motif. A 'ERGGDP' region motif is present at residues 191–196 (ERGGDP). Tryptophan 232 serves as a coordination point for L-cysteinyl-5'-AMP. Residue cysteine 236 coordinates Zn(2+). Residue 254-256 (GSD) coordinates L-cysteinyl-5'-AMP. Histidine 261 is a Zn(2+) binding site. L-cysteinyl-5'-AMP is bound at residue valine 289. Positions 295–299 (KMSKS) match the 'KMSKS' region motif.

Belongs to the class-I aminoacyl-tRNA synthetase family. MshC subfamily. As to quaternary structure, monomer. Zn(2+) serves as cofactor.

The enzyme catalyses 1D-myo-inositol 2-amino-2-deoxy-alpha-D-glucopyranoside + L-cysteine + ATP = 1D-myo-inositol 2-(L-cysteinylamino)-2-deoxy-alpha-D-glucopyranoside + AMP + diphosphate + H(+). Catalyzes the ATP-dependent condensation of GlcN-Ins and L-cysteine to form L-Cys-GlcN-Ins. In Kineococcus radiotolerans (strain ATCC BAA-149 / DSM 14245 / SRS30216), this protein is L-cysteine:1D-myo-inositol 2-amino-2-deoxy-alpha-D-glucopyranoside ligase.